The following is a 346-amino-acid chain: Probable disease resistance protein At5g45440 (346 aa).

The NB-ARC domain maps to 38-116 (KQVEDRVETD…AYAPRIWVSM (79 aa)). 85–92 (GEYGVGKT) contributes to the ATP binding site. Residues 315 to 346 (FDDGKANQNGSKDGKTDSVDNPNSEESKTKPL) form a disordered region.

Possible disease resistance protein. This chain is Probable disease resistance protein At5g45440, found in Arabidopsis thaliana (Mouse-ear cress).